The primary structure comprises 376 residues: Queuine tRNA-ribosyltransferase (376 aa).

D93 functions as the Proton acceptor in the catalytic mechanism. Substrate-binding positions include 93–97 (DSGGF), D147, Q190, and G217. Residues 248 to 254 (GVGKPDD) are RNA binding. The active-site Nucleophile is D267. Zn(2+)-binding residues include C305, C307, C310, and H336.

The protein belongs to the queuine tRNA-ribosyltransferase family. As to quaternary structure, homodimer. Within each dimer, one monomer is responsible for RNA recognition and catalysis, while the other monomer binds to the replacement base PreQ1. Requires Zn(2+) as cofactor.

It catalyses the reaction 7-aminomethyl-7-carbaguanine + guanosine(34) in tRNA = 7-aminomethyl-7-carbaguanosine(34) in tRNA + guanine. The protein operates within tRNA modification; tRNA-queuosine biosynthesis. Catalyzes the base-exchange of a guanine (G) residue with the queuine precursor 7-aminomethyl-7-deazaguanine (PreQ1) at position 34 (anticodon wobble position) in tRNAs with GU(N) anticodons (tRNA-Asp, -Asn, -His and -Tyr). Catalysis occurs through a double-displacement mechanism. The nucleophile active site attacks the C1' of nucleotide 34 to detach the guanine base from the RNA, forming a covalent enzyme-RNA intermediate. The proton acceptor active site deprotonates the incoming PreQ1, allowing a nucleophilic attack on the C1' of the ribose to form the product. After dissociation, two additional enzymatic reactions on the tRNA convert PreQ1 to queuine (Q), resulting in the hypermodified nucleoside queuosine (7-(((4,5-cis-dihydroxy-2-cyclopenten-1-yl)amino)methyl)-7-deazaguanosine). The protein is Queuine tRNA-ribosyltransferase of Ruegeria sp. (strain TM1040) (Silicibacter sp.).